Reading from the N-terminus, the 176-residue chain is ATP-dependent protease subunit HslV (176 aa).

Threonine 2 is an active-site residue. 3 residues coordinate Na(+): glycine 157, cysteine 160, and threonine 163.

This sequence belongs to the peptidase T1B family. HslV subfamily. In terms of assembly, a double ring-shaped homohexamer of HslV is capped on each side by a ring-shaped HslU homohexamer. The assembly of the HslU/HslV complex is dependent on binding of ATP.

Its subcellular location is the cytoplasm. The catalysed reaction is ATP-dependent cleavage of peptide bonds with broad specificity.. With respect to regulation, allosterically activated by HslU binding. Protease subunit of a proteasome-like degradation complex believed to be a general protein degrading machinery. This is ATP-dependent protease subunit HslV from Pseudomonas savastanoi pv. phaseolicola (strain 1448A / Race 6) (Pseudomonas syringae pv. phaseolicola (strain 1448A / Race 6)).